Reading from the N-terminus, the 1038-residue chain is Translation initiation factor IF-2 (1038 aa).

Disordered regions lie at residues 39-346 and 403-451; these read TISE…KWQE and KPKA…PEKV. Residues 103 to 125 show a composition bias toward polar residues; sequence RNTTSNAPEASVANNQIASSEAN. The segment covering 157–176 has biased composition (low complexity); the sequence is PQKPAAPEAEPEAQSQAPAK. 2 stretches are compositionally biased toward basic and acidic residues: residues 178–197 and 226–243; these read AVEK…ERQP and PILK…DQAK. Low complexity predominate over residues 407 to 423; that stretch reads ARAATAATAAPISSPTT. Basic and acidic residues predominate over residues 431–450; it reads NNRDQNRRQETEVKRERPEK. In terms of domain architecture, tr-type G spans 532–705; sequence RRPPVVTIMG…LLVAEVGELS (174 aa). Residues 541–548 are G1; the sequence is GHVDHGKT. Residue 541–548 participates in GTP binding; that stretch reads GHVDHGKT. A G2 region spans residues 566–570; it reads GITQH. The tract at residues 591–594 is G3; the sequence is DTPG. GTP contacts are provided by residues 591-595 and 645-648; these read DTPGH and NKID. The interval 645–648 is G4; it reads NKID. The tract at residues 681–683 is G5; that stretch reads SAI.

The protein belongs to the TRAFAC class translation factor GTPase superfamily. Classic translation factor GTPase family. IF-2 subfamily.

It localises to the cytoplasm. One of the essential components for the initiation of protein synthesis. Protects formylmethionyl-tRNA from spontaneous hydrolysis and promotes its binding to the 30S ribosomal subunits. Also involved in the hydrolysis of GTP during the formation of the 70S ribosomal complex. This is Translation initiation factor IF-2 from Trichormus variabilis (strain ATCC 29413 / PCC 7937) (Anabaena variabilis).